Here is a 507-residue protein sequence, read N- to C-terminus: Cytochrome P450 monooxygenase nodZ (507 aa).

Helical transmembrane passes span 1-21 (MITASTSVFGGLILAFIFSLL) and 205-225 (GFLHCMAIAGTILGAVTPWFL). Residue N352 is glycosylated (N-linked (GlcNAc...) asparagine). C445 provides a ligand contact to heme.

This sequence belongs to the cytochrome P450 family. The cofactor is heme.

It localises to the membrane. It functions in the pathway secondary metabolite biosynthesis. In terms of biological role, cytochrome P450 monooxygenase; part of the gene cluster that mediates the biosynthesis of the indole diterpenes nodulisporic acids (NA). Nodulisporic acid A (NAA) and its chemically modified derivatives are of particular significance because of their highly potent insecticidal activity against blood-feeding arthropods and lack of observable adverse effects on mammals, in particular the tremogenicity associated with the paspaline-derived IDTs is not observed. The geranylgeranyl diphosphate (GGPP) synthase ggs1, localized outside of the cluster, is proposed to catalyze the first step in nodulisporic acid biosynthesis via conversion of farnesyl pyrophosphate and isopentyl pyrophosphate into geranylgeranyl pyrophosphate (GGPP). Condensation of indole-3-glycerol phosphate with GGPP by the prenyl transferase nodC then forms 3-geranylgeranylindole (3-GGI). Epoxidation by the FAD-dependent monooxygenase nodM leads to a single-epoxidized-GGI that is substrate of the terpene cyclase nodB for cyclization to yield emindole SB. The terminal methyl carbon, C28, of emindole SB is then oxidized by the cytochrome P450 monooxygenase nodW to produce nodulisporic acid F (NAF), the pentacyclic core of NAA. NAF is converted to nodulisporic acid E (NAE) via prenylation. This step is probably performed by one of the indole diterpene prenyltransferases nodD1 or nodD2. Several oxidation steps performed by the FAD-linked oxidoreductase nodO and one of the cytochrome P450 monooxygenase nodR, nodX or nodZ further convert NAE to nodulisporic acid D (NAD). NAD is substrate of cytochrome P450 monooxygenase nodJ to produce the precursor of nodulisporic acid C (NAC), converted to NAC by one of the indole diterpene prenyltransferases nodD1 or nodD2. The FAD-dependent monooxygenase nodY2 then oxidizes NAC to nodulisporic acid B (NAB). Finally NAB is converted to NAA by one of the cytochrome P450 monooxygenases nodR, nodX or nodZ. This Hypoxylon pulicicidum protein is Cytochrome P450 monooxygenase nodZ.